We begin with the raw amino-acid sequence, 137 residues long: Small ribosomal subunit protein uS12 (137 aa).

Asp102 is modified (3-methylthioaspartic acid).

This sequence belongs to the universal ribosomal protein uS12 family. As to quaternary structure, part of the 30S ribosomal subunit. Contacts proteins S8 and S17. May interact with IF1 in the 30S initiation complex.

In terms of biological role, with S4 and S5 plays an important role in translational accuracy. Functionally, interacts with and stabilizes bases of the 16S rRNA that are involved in tRNA selection in the A site and with the mRNA backbone. Located at the interface of the 30S and 50S subunits, it traverses the body of the 30S subunit contacting proteins on the other side and probably holding the rRNA structure together. The combined cluster of proteins S8, S12 and S17 appears to hold together the shoulder and platform of the 30S subunit. The protein is Small ribosomal subunit protein uS12 of Phytoplasma mali (strain AT).